The following is a 153-amino-acid chain: Ribosome maturation factor RimP (153 aa).

This sequence belongs to the RimP family.

Its subcellular location is the cytoplasm. Functionally, required for maturation of 30S ribosomal subunits. This Picosynechococcus sp. (strain ATCC 27264 / PCC 7002 / PR-6) (Agmenellum quadruplicatum) protein is Ribosome maturation factor RimP.